The following is a 248-amino-acid chain: Ubiquinone biosynthesis O-methyltransferase (248 aa).

The S-adenosyl-L-methionine site is built by R40, G71, D92, and M135.

It belongs to the methyltransferase superfamily. UbiG/COQ3 family.

The enzyme catalyses a 3-demethylubiquinol + S-adenosyl-L-methionine = a ubiquinol + S-adenosyl-L-homocysteine + H(+). It catalyses the reaction a 3-(all-trans-polyprenyl)benzene-1,2-diol + S-adenosyl-L-methionine = a 2-methoxy-6-(all-trans-polyprenyl)phenol + S-adenosyl-L-homocysteine + H(+). Its pathway is cofactor biosynthesis; ubiquinone biosynthesis. Functionally, O-methyltransferase that catalyzes the 2 O-methylation steps in the ubiquinone biosynthetic pathway. The protein is Ubiquinone biosynthesis O-methyltransferase of Dinoroseobacter shibae (strain DSM 16493 / NCIMB 14021 / DFL 12).